Consider the following 323-residue polypeptide: Aquaporin-2 (323 aa).

Transmembrane regions (helical) follow at residues 32-54 (FLAV…FTHR), 74-96 (YVAG…SVLG), and 103-123 (CFCY…AIYA). The NPA 1 signature appears at 85–87 (NPA). N-linked (GlcNAc...) asparagine glycosylation is present at Asn-143. 2 consecutive transmembrane segments (helical) span residues 161 to 181 (GAFV…LSMV) and 193 to 213 (FPIA…YNAG). The NPA 2 signature appears at 217–219 (NPS). The chain crosses the membrane as a helical span at residues 243-263 (YTWFFVPVVGSHAGAIVGAVI). The N-linked (GlcNAc...) asparagine glycan is linked to Asn-292.

This sequence belongs to the MIP/aquaporin (TC 1.A.8) family.

It is found in the cell membrane. The catalysed reaction is H2O(in) = H2O(out). It carries out the reaction glycerol(in) = glycerol(out). Aquaglyceroporin that may modulate the water content and osmolytes during anhydrobiosis. The protein is Aquaporin-2 of Milnesium tardigradum (Water bear).